We begin with the raw amino-acid sequence, 631 residues long: 1-deoxy-D-xylulose-5-phosphate synthase (631 aa).

Thiamine diphosphate-binding positions include His-87 and 128–130 (GHS). Residue Asp-159 coordinates Mg(2+). Thiamine diphosphate contacts are provided by residues 160–161 (GA), Asn-188, Phe-295, and Glu-378. Asn-188 provides a ligand contact to Mg(2+).

It belongs to the transketolase family. DXPS subfamily. Homodimer. It depends on Mg(2+) as a cofactor. Requires thiamine diphosphate as cofactor.

It catalyses the reaction D-glyceraldehyde 3-phosphate + pyruvate + H(+) = 1-deoxy-D-xylulose 5-phosphate + CO2. Its pathway is metabolic intermediate biosynthesis; 1-deoxy-D-xylulose 5-phosphate biosynthesis; 1-deoxy-D-xylulose 5-phosphate from D-glyceraldehyde 3-phosphate and pyruvate: step 1/1. In terms of biological role, catalyzes the acyloin condensation reaction between C atoms 2 and 3 of pyruvate and glyceraldehyde 3-phosphate to yield 1-deoxy-D-xylulose-5-phosphate (DXP). The polypeptide is 1-deoxy-D-xylulose-5-phosphate synthase (Pseudomonas syringae pv. tomato (strain ATCC BAA-871 / DC3000)).